Reading from the N-terminus, the 305-residue chain is Phospho-N-acetylmuramoyl-pentapeptide-transferase (305 aa).

9 consecutive transmembrane segments (helical) span residues M1 to K21, A46 to G66, E73 to L93, F113 to H133, L139 to F159, I174 to L194, V207 to L227, L233 to I253, and V282 to G302.

This sequence belongs to the glycosyltransferase 4 family. MraY subfamily. Mg(2+) serves as cofactor.

Its subcellular location is the cell membrane. It catalyses the reaction UDP-N-acetyl-alpha-D-muramoyl-L-alanyl-gamma-D-glutamyl-meso-2,6-diaminopimeloyl-D-alanyl-D-alanine + di-trans,octa-cis-undecaprenyl phosphate = di-trans,octa-cis-undecaprenyl diphospho-N-acetyl-alpha-D-muramoyl-L-alanyl-D-glutamyl-meso-2,6-diaminopimeloyl-D-alanyl-D-alanine + UMP. It participates in cell wall biogenesis; peptidoglycan biosynthesis. Functionally, catalyzes the initial step of the lipid cycle reactions in the biosynthesis of the cell wall peptidoglycan: transfers peptidoglycan precursor phospho-MurNAc-pentapeptide from UDP-MurNAc-pentapeptide onto the lipid carrier undecaprenyl phosphate, yielding undecaprenyl-pyrophosphoryl-MurNAc-pentapeptide, known as lipid I. The protein is Phospho-N-acetylmuramoyl-pentapeptide-transferase of Deinococcus deserti (strain DSM 17065 / CIP 109153 / LMG 22923 / VCD115).